The sequence spans 311 residues: Protoheme IX farnesyltransferase (311 aa).

The next 8 helical transmembrane spans lie at 30–50 (VVQL…PGWP), 55–75 (WGVA…AAAF), 108–128 (FAVL…NALT), 129–149 (MWLT…LLKP), 153–173 (QNIV…WAAM), 182–202 (WILC…LALY), 233–253 (FVLF…WFYL), and 287–307 (IWHL…GPLL).

Belongs to the UbiA prenyltransferase family. Protoheme IX farnesyltransferase subfamily.

The protein localises to the cell inner membrane. It catalyses the reaction heme b + (2E,6E)-farnesyl diphosphate + H2O = Fe(II)-heme o + diphosphate. Its pathway is porphyrin-containing compound metabolism; heme O biosynthesis; heme O from protoheme: step 1/1. In terms of biological role, converts heme B (protoheme IX) to heme O by substitution of the vinyl group on carbon 2 of heme B porphyrin ring with a hydroxyethyl farnesyl side group. The sequence is that of Protoheme IX farnesyltransferase from Methylibium petroleiphilum (strain ATCC BAA-1232 / LMG 22953 / PM1).